The following is a 235-amino-acid chain: Thiamine import ATP-binding protein ThiQ (235 aa).

Residues 2 to 230 (LKLENLTYRY…TVPEAAILGM (229 aa)) enclose the ABC transporter domain. Position 32–39 (32–39 (GPSGAGKS)) interacts with ATP.

It belongs to the ABC transporter superfamily. Thiamine importer (TC 3.A.1.19.1) family. As to quaternary structure, the complex is composed of two ATP-binding proteins (ThiQ), two transmembrane proteins (ThiP) and a solute-binding protein (ThiB).

It is found in the cell inner membrane. It carries out the reaction thiamine(out) + ATP + H2O = thiamine(in) + ADP + phosphate + H(+). Functionally, part of the ABC transporter complex ThiBPQ involved in thiamine import. Responsible for energy coupling to the transport system. The protein is Thiamine import ATP-binding protein ThiQ of Photorhabdus laumondii subsp. laumondii (strain DSM 15139 / CIP 105565 / TT01) (Photorhabdus luminescens subsp. laumondii).